Consider the following 248-residue polypeptide: Probable transcriptional regulatory protein Smed_2641 (248 aa).

This sequence belongs to the TACO1 family.

The protein localises to the cytoplasm. This is Probable transcriptional regulatory protein Smed_2641 from Sinorhizobium medicae (strain WSM419) (Ensifer medicae).